Reading from the N-terminus, the 249-residue chain is 2,3-bisphosphoglycerate-dependent phosphoglycerate mutase (249 aa).

Substrate contacts are provided by residues 8–15 (RHGESQWN), 21–22 (TG), arginine 60, 87–90 (ERHY), lysine 98, 114–115 (RR), and 183–184 (GN). Catalysis depends on histidine 9, which acts as the Tele-phosphohistidine intermediate. Glutamate 87 acts as the Proton donor/acceptor in catalysis.

Belongs to the phosphoglycerate mutase family. BPG-dependent PGAM subfamily.

The enzyme catalyses (2R)-2-phosphoglycerate = (2R)-3-phosphoglycerate. Its pathway is carbohydrate degradation; glycolysis; pyruvate from D-glyceraldehyde 3-phosphate: step 3/5. In terms of biological role, catalyzes the interconversion of 2-phosphoglycerate and 3-phosphoglycerate. The protein is 2,3-bisphosphoglycerate-dependent phosphoglycerate mutase of Pelodictyon phaeoclathratiforme (strain DSM 5477 / BU-1).